We begin with the raw amino-acid sequence, 139 residues long: Cystatin-1 (139 aa).

The N-terminal stretch at 1-22 is a signal peptide; that stretch reads MHSRLPVPASLCLLLLLPSVLP. The Cystatin domain occupies 27–127; that stretch reads GGLSPRDVTD…CHFEVWSRPW (101 aa). A Secondary area of contact motif is present at residues 71–75; sequence QVVSG. 2 disulfide bridges follow: cysteine 89/cysteine 105 and cysteine 118/cysteine 138.

It belongs to the cystatin family. Expressed by the venom gland.

It localises to the secreted. In terms of biological role, inhibits various C1 cysteine proteases including cathepsin L, papain and cathepsin B. This protein has no toxic activity and its function in the venom is unknown. It may play a role as housekeeping or regulatory protein. This is Cystatin-1 from Crotalus adamanteus (Eastern diamondback rattlesnake).